The following is a 419-amino-acid chain: Putative zinc metalloprotease spyM18_2031 (419 aa).

H18 contacts Zn(2+). E19 is an active-site residue. H22 is a Zn(2+) binding site. The next 4 membrane-spanning stretches (helical) occupy residues 169-191, 301-323, 343-365, and 392-411; these read LITNFAGPMNNFILGIVVFILLV, LAWSGAFTILNALKGLITGFSLN, LESVLSLMAMLSINLGIFNLIPI, and AYITLAGVAIMVVLMIAVTW. The 100-residue stretch at 175–274 folds into the PDZ domain; that stretch reads GPMNNFILGI…LKTVAVKPQK (100 aa).

This sequence belongs to the peptidase M50B family. It depends on Zn(2+) as a cofactor.

It is found in the cell membrane. The polypeptide is Putative zinc metalloprotease spyM18_2031 (Streptococcus pyogenes serotype M18 (strain MGAS8232)).